Reading from the N-terminus, the 453-residue chain is UDP-N-acetylmuramoylalanine--D-glutamate ligase (453 aa).

117–123 contacts ATP; that stretch reads GANGKST.

This sequence belongs to the MurCDEF family.

Its subcellular location is the cytoplasm. It carries out the reaction UDP-N-acetyl-alpha-D-muramoyl-L-alanine + D-glutamate + ATP = UDP-N-acetyl-alpha-D-muramoyl-L-alanyl-D-glutamate + ADP + phosphate + H(+). The protein operates within cell wall biogenesis; peptidoglycan biosynthesis. Its function is as follows. Cell wall formation. Catalyzes the addition of glutamate to the nucleotide precursor UDP-N-acetylmuramoyl-L-alanine (UMA). This is UDP-N-acetylmuramoylalanine--D-glutamate ligase from Methylobacillus flagellatus (strain ATCC 51484 / DSM 6875 / VKM B-1610 / KT).